A 151-amino-acid chain; its full sequence is Mating pheromone 3 (151 aa).

The N-terminal stretch at 1-16 is a signal peptide; that stretch reads MKAIFIILAILMVTQA. Residues 17-52 constitute a propeptide that is removed on maturation; the sequence is FKMTSKVNTKLQSQIQSKFQSKNKLASTFQTSSQLK.

The protein resides in the secreted. Mating ciliate pheromones (or gamones) are diffusible extracellular communication signals that distinguish different intraspecific classes of cells commonly referred to as 'mating types'. They prepare the latter for conjugation by changing their cell surface properties. The sequence is that of Mating pheromone 3 (PHR3) from Euplotoides octocarinatus (Freshwater ciliate).